The primary structure comprises 192 residues: Ion-translocating oxidoreductase complex subunit B (192 aa).

The segment at 1–26 (MSAVWIAVIAISLLGLIFGLILGYAS) is hydrophobic. Positions 32–91 (QDDPVVEKIDELLPQSQCGQCGYPGCRPYAEAVGAQGEKINRCAPGGEAVMLKIAALLNV) constitute a 4Fe-4S domain. 12 residues coordinate [4Fe-4S] cluster: cysteine 49, cysteine 52, cysteine 57, cysteine 74, cysteine 117, cysteine 120, cysteine 123, cysteine 127, cysteine 147, cysteine 150, cysteine 153, and cysteine 157. 2 consecutive 4Fe-4S ferredoxin-type domains span residues 108–137 (MLAV…GATR) and 138–167 (AMHT…LVPV).

The protein belongs to the 4Fe4S bacterial-type ferredoxin family. RnfB subfamily. As to quaternary structure, the complex is composed of six subunits: RnfA, RnfB, RnfC, RnfD, RnfE and RnfG. It depends on [4Fe-4S] cluster as a cofactor.

It is found in the cell inner membrane. Part of a membrane-bound complex that couples electron transfer with translocation of ions across the membrane. This is Ion-translocating oxidoreductase complex subunit B from Klebsiella pneumoniae (strain 342).